A 56-amino-acid polypeptide reads, in one-letter code: Putative 2-Cys peroxiredoxin BAS1 (56 aa).

The protein belongs to the peroxiredoxin family. AhpC/Prx1 subfamily. Homodimer; disulfide-linked, upon oxidation.

It is found in the plastid. It localises to the chloroplast. The catalysed reaction is a hydroperoxide + [thioredoxin]-dithiol = an alcohol + [thioredoxin]-disulfide + H2O. Thiol-specific peroxidase that catalyzes the reduction of hydrogen peroxide and organic hydroperoxides to water and alcohols, respectively. Plays a role in cell protection against oxidative stress by detoxifying peroxides. May be an antioxidant enzyme particularly in the developing shoot and photosynthesizing leaf. The chain is Putative 2-Cys peroxiredoxin BAS1 from Pinus strobus (Eastern white pine).